The chain runs to 137 residues: Hydrogenase-4 component J (137 aa).

It to E.coli HycH.

In terms of biological role, possible component of hydrogenase 4. In Escherichia coli (strain K12), this protein is Hydrogenase-4 component J.